Here is a 572-residue protein sequence, read N- to C-terminus: AAA ATPase forming ring-shaped complexes (572 aa).

The interval 1 to 22 (MTEPRHESGSAAPQRPATDPVQ) is disordered. Residues 21 to 67 (VQRQVNLLRDQKRNLDKQAAALASQNEKLVRLLNASRQEIVGLKKTL) are a coiled coil. 270–275 (GNGKTL) provides a ligand contact to ATP. Acidic residues predominate over residues 527-539 (HEQQDLPDTEDSE). A disordered region spans residues 527 to 572 (HEQQDLPDTEDSEDWARLTGRRGDTIDSVHMASHRPQGEPGPGATP).

The protein belongs to the AAA ATPase family. As to quaternary structure, homohexamer. Assembles into a hexameric ring structure.

This Kocuria rhizophila (strain ATCC 9341 / DSM 348 / NBRC 103217 / DC2201) protein is AAA ATPase forming ring-shaped complexes.